Here is a 585-residue protein sequence, read N- to C-terminus: A-type ATP synthase subunit A (585 aa).

231–238 is a binding site for ATP; sequence GPFGSGKT.

The protein belongs to the ATPase alpha/beta chains family. Has multiple subunits with at least A(3), B(3), C, D, E, F, H, I and proteolipid K(x).

It localises to the cell membrane. The catalysed reaction is ATP + H2O + 4 H(+)(in) = ADP + phosphate + 5 H(+)(out). Functionally, produces ATP from ADP in the presence of a proton gradient across the membrane. The archaeal alpha chain is a catalytic subunit. In terms of biological role, component of the A-type ATP synthase that produces ATP from ADP in the presence of a proton gradient across the membrane. The A chain is the catalytic subunit. In Thermococcus kodakarensis (strain ATCC BAA-918 / JCM 12380 / KOD1) (Pyrococcus kodakaraensis (strain KOD1)), this protein is A-type ATP synthase subunit A.